The following is a 202-amino-acid chain: Rho GDP-dissociation inhibitor (202 aa).

Ala2 is modified (N-acetylalanine). Residue Thr27 is modified to Phosphothreonine. Phosphoserine is present on Ser40.

It belongs to the Rho GDI family.

The protein resides in the cytoplasm. Functionally, regulates the GDP/GTP exchange reaction of the Rho proteins by inhibiting the dissociation of GDP from them, and the subsequent binding of GTP to them. In Saccharomyces cerevisiae (strain ATCC 204508 / S288c) (Baker's yeast), this protein is Rho GDP-dissociation inhibitor (RDI1).